Reading from the N-terminus, the 232-residue chain is Ion-translocating oxidoreductase complex subunit E (232 aa).

A run of 6 helical transmembrane segments spans residues 18-38 (GLVQLLGLCPLLAVTATLTNA), 39-59 (LGLGVATMLVLIGSNILVSLV), 69-89 (IPVFVMIIAALVTAVQLLINA), 93-113 (GLYLSLGIFLPLIVTNCIIIG), 127-147 (AAFDGLMMGLGFTLVLAVLGA), and 182-202 (PFLLAMLPPGAFIVMGLLIAL).

Belongs to the NqrDE/RnfAE family. The complex is composed of six subunits: RnfA, RnfB, RnfC, RnfD, RnfE and RnfG.

The protein localises to the cell inner membrane. In terms of biological role, part of a membrane-bound complex that couples electron transfer with translocation of ions across the membrane. The protein is Ion-translocating oxidoreductase complex subunit E of Shewanella sp. (strain MR-4).